The chain runs to 111 residues: Movement protein TGB2 (111 aa).

The Cytoplasmic segment spans residues 1-16; it reads MSSHQNFLTPPPDHSK. The helical transmembrane segment at 17-37 threads the bilayer; the sequence is AILAVAVGVGLAIVLHFSLSY. The Lumenal portion of the chain corresponds to 38 to 72; that stretch reads KLPSPGDNIHSLPFGGTYRDGTKSIIYNSPHRGPG. A helical transmembrane segment spans residues 73-93; sequence QSGALPIITVFAIIECTLHVL. Topologically, residues 94-111 are cytoplasmic; that stretch reads RKRDNPVRPQHSDCPNCS.

It belongs to the Tymovirales TGBp2 protein family.

The protein resides in the host endoplasmic reticulum membrane. Functionally, plays a role in viral cell-to-cell propagation, by facilitating genome transport to neighboring plant cells through plasmosdesmata,. This is Movement protein TGB2 from Carica papaya (Papaya).